Consider the following 316-residue polypeptide: Solute carrier family 25 member 32 (316 aa).

3 Solcar repeats span residues 20-109, 118-209, and 222-306; these read HVRY…IKSY, LEPL…LKLK, and LSTA…VSHF. The next 6 membrane-spanning stretches (helical) occupy residues 26–46, 89–106, 123–143, 185–203, 227–243, and 281–300; these read LVAGVSGGVLSNLALHPLDLV, VWGAGLSWGLYFFFYNAI, YLVSAAEAGAMTLCITNPLWV, GFVPGLFGTSHGALQFMAY, YISVAALSKIFAVAATY, and GIAPNLIRVTPACCITFVVY.

The protein belongs to the mitochondrial carrier (TC 2.A.29) family.

The protein localises to the mitochondrion inner membrane. The enzyme catalyses FAD(in) = FAD(out). In terms of biological role, facilitates flavin adenine dinucleotide (FAD) translocation across the mitochondrial inner membrane into the mitochondrial matrix where it acts as a redox cofactor to assist flavoenzyme activities in fundamental metabolic processes including fatty acid beta-oxidation, amino acid and choline metabolism as well as mitochondrial electron transportation. In particular, provides FAD to DLD dehydrogenase of the glycine cleavage system, part of mitochondrial one-carbon metabolic pathway involved in neural tube closure in early embryogenesis. The chain is Solute carrier family 25 member 32 from Mus musculus (Mouse).